The following is a 165-amino-acid chain: MDIEFGNEYRTYGVGLGGYIEGMERGGVANRLNQMLMNPEEKFFSTLNLAFEKINDYRPLDANTRDLMADFATKMPHLSFKNATTFVLGCLASIKHKNNVLNKNEIKKIFSLLHHFKDTENISPSDVIRYAKFAMINNFYIEDLDINEEDDEEYGDEEYGDEEYE.

This is an uncharacterized protein from Invertebrate iridescent virus 6 (IIV-6).